The following is a 1001-amino-acid chain: Serine/threonine-protein kinase TAO1-B (1001 aa).

Residues 28 to 281 form the Protein kinase domain; it reads FSDLREIGHG…SDELLKHMFV (254 aa). ATP contacts are provided by residues 34–42 and K57; that span reads IGHGSFGAV. D151 functions as the Proton acceptor in the catalytic mechanism. 2 disordered regions span residues 324 to 435 and 567 to 586; these read PAVE…YRNR and KEEL…EWLS. Residues 350–370 are compositionally biased toward low complexity; sequence SNQSIPSMSISASSQSSSVNS. Composition is skewed to basic and acidic residues over residues 375–388 and 577–586; these read SDDK…EGDH and PKKEKQEWLS. Coiled-coil stretches lie at residues 458–651 and 754–877; these read SELR…EHAM and KAVL…EIEA. The tract at residues 911 to 1001 is disordered; that stretch reads SHNPTGGPGP…ISNGSHMSYT (91 aa). Over residues 921–930 the composition is skewed to low complexity; that stretch reads HWGHPMAGPP. 2 stretches are compositionally biased toward polar residues: residues 949-967 and 975-1001; these read GSVQ…NSPQ and GGRT…MSYT.

This sequence belongs to the protein kinase superfamily. STE Ser/Thr protein kinase family. STE20 subfamily.

The protein localises to the cytoplasm. It catalyses the reaction L-seryl-[protein] + ATP = O-phospho-L-seryl-[protein] + ADP + H(+). The enzyme catalyses L-threonyl-[protein] + ATP = O-phospho-L-threonyl-[protein] + ADP + H(+). Its function is as follows. Serine/threonine-protein kinase involved in various processes such as p38/mapk14 stress-activated MAPK cascade, DNA damage response and regulation of cytoskeleton stability. Acts as an activator of the p38/MAPK14 stress-activated MAPK cascade by mediating phosphorylation and subsequent activation of upstream MAP kinase kinases. In response to DNA damage, involved in the G2/M transition DNA damage checkpoint by activating the p38/MAPK14 stress-activated MAPK cascade. This Xenopus laevis (African clawed frog) protein is Serine/threonine-protein kinase TAO1-B (taok1-b).